A 177-amino-acid polypeptide reads, in one-letter code: ATP-dependent protease subunit HslV (177 aa).

Residue T2 is part of the active site. The Na(+) site is built by G158, C161, and T164.

Belongs to the peptidase T1B family. HslV subfamily. In terms of assembly, a double ring-shaped homohexamer of HslV is capped on each side by a ring-shaped HslU homohexamer. The assembly of the HslU/HslV complex is dependent on binding of ATP.

The protein localises to the cytoplasm. The enzyme catalyses ATP-dependent cleavage of peptide bonds with broad specificity.. Its activity is regulated as follows. Allosterically activated by HslU binding. Protease subunit of a proteasome-like degradation complex believed to be a general protein degrading machinery. This chain is ATP-dependent protease subunit HslV, found in Pseudomonas aeruginosa (strain LESB58).